Consider the following 1469-residue polypeptide: Chromosome condensation protein dpy-27 (1469 aa).

The segment at 1-25 (MQPFKRRALTSDDDRPYADTDSMPE) is disordered. The span at 9–18 (LTSDDDRPYA) shows a compositional bias: basic and acidic residues. 122–129 (GPNGSGKS) is an ATP binding site. A coiled-coil region spans residues 356–542 (ELEENKDIML…KGTLQTMMAE (187 aa)). The 116-residue stretch at 621–736 (PGFKGRLGDL…VDSLEEATRI (116 aa)) folds into the SMC hinge domain. The interval 758–781 (GALTGGGKPTTGRIRNDNNPNMSG) is disordered. Coiled coils occupy residues 805–974 (LKLQ…AQLE), 1016–1056 (AYQT…DIIE), and 1159–1182 (TSAK…RMAR). The tract at residues 1404–1469 (LPEFNRFPPA…VQRRVRRSRH (66 aa)) is disordered. Over residues 1439–1449 (EEEDEEDELIE) the composition is skewed to acidic residues.

This sequence belongs to the SMC family. SMC4 subfamily. Component of the dosage compensation complex, which contains the mix-1/SMC2 and dpy-27/SMC4 heterodimer, and three non SMC subunits that probably regulate the complex: dpy-26, capg-1 and dpy-28. Within the complex, interacts with dpy-28, mix-1, dpy-26 and capg-1. Interacts with dpy-21. Interacts with dpy-28; the interaction is required for dpy-28 protein stability and dpy-28 association with the X chromosome. Interacts with smcl-1.

The protein localises to the nucleus. It localises to the chromosome. Functionally, central component of the condensin I-like dosage compensation complex that associates specifically with hermaphrodite X chromosomes to reduce their gene transcription throughout development. Its strong similarity with the condensin subunit smc4 suggests that it may reduce the X-chromosome transcript level by condensing the chromatin structure during interphase. Involved in the recruitment of the dosage compensation proteins mix-1 and dpy-21 to the X chromosome. Might be involved in the reduction of histone H4 lysine 16 acetylation (H4K16ac) on dosage compensated X chromosomes. As a member of the dosage compensation complex, also binds to regulatory regions of the autosomal her-1 gene, required for male development, possibly contributing to its repression in hermaphrodites. Also plays a role in the regulation of growth and body fat metabolism downstream of the TOR complex 2 pathway. The polypeptide is Chromosome condensation protein dpy-27 (dpy-27) (Caenorhabditis elegans).